Consider the following 101-residue polypeptide: Small ribosomal subunit protein uS14 (101 aa).

The segment covering 1 to 10 (MAKKSAIEKN) has biased composition (basic and acidic residues). The interval 1–23 (MAKKSAIEKNNRRKKMTKNAAPK) is disordered. The segment covering 11 to 23 (NRRKKMTKNAAPK) has biased composition (basic residues).

Belongs to the universal ribosomal protein uS14 family. As to quaternary structure, part of the 30S ribosomal subunit. Contacts proteins S3 and S10.

Binds 16S rRNA, required for the assembly of 30S particles and may also be responsible for determining the conformation of the 16S rRNA at the A site. The chain is Small ribosomal subunit protein uS14 from Rhodopseudomonas palustris (strain TIE-1).